The primary structure comprises 82 residues: Envelope small membrane protein (82 aa).

At M1 to V19 the chain is on the virion surface side. Residues F20–I40 traverse the membrane as a helical segment. Topologically, residues K41–V82 are intravirion.

This sequence belongs to the alphacoronaviruses E protein family. In terms of assembly, homopentamer. Interacts with membrane protein M in the budding compartment of the host cell, which is located between endoplasmic reticulum and the Golgi complex. Interacts with Nucleoprotein.

The protein resides in the host Golgi apparatus membrane. Functionally, plays a central role in virus morphogenesis and assembly. Acts as a viroporin and self-assembles in host membranes forming pentameric protein-lipid pores that allow ion transport. Also plays a role in the induction of apoptosis. This is Envelope small membrane protein from Feline coronavirus (strain FIPV WSU-79/1146) (FCoV).